Consider the following 701-residue polypeptide: Polyribonucleotide nucleotidyltransferase (701 aa).

Residues Asp-487 and Asp-493 each coordinate Mg(2+). The KH domain maps to 554–613 (PTMIAMKIDTDKIRDVIGKGGATIRAICEETKASIDIEDDGSIKIFGETKEAAEAAKQRI). The S1 motif domain maps to 623–691 (GKIYVGKVER…NRGRIKLSIK (69 aa)).

It belongs to the polyribonucleotide nucleotidyltransferase family. Component of the RNA degradosome, which is a multiprotein complex involved in RNA processing and mRNA degradation. Requires Mg(2+) as cofactor.

It is found in the cytoplasm. The catalysed reaction is RNA(n+1) + phosphate = RNA(n) + a ribonucleoside 5'-diphosphate. In terms of biological role, involved in mRNA degradation. Catalyzes the phosphorolysis of single-stranded polyribonucleotides processively in the 3'- to 5'-direction. This is Polyribonucleotide nucleotidyltransferase from Pseudomonas putida (strain GB-1).